The sequence spans 726 residues: Dipeptidyl-peptidase 5 (726 aa).

The N-terminal stretch at 1-19 (MAAAKWLIASLAFASSGLA) is a signal peptide. 2 N-linked (GlcNAc...) asparagine glycosylation sites follow: N96 and N252. Residues 269–291 (AEPINKRNGPRTPQGIEGASSSP) form a disordered region. The Charge relay system role is filled by S558. N-linked (GlcNAc...) asparagine glycans are attached at residues N605 and N638. Catalysis depends on charge relay system residues D641 and H673. N699 is a glycosylation site (N-linked (GlcNAc...) asparagine).

The protein belongs to the peptidase S9C family.

It is found in the secreted. The chain is Dipeptidyl-peptidase 5 (DPPV) from Trichophyton schoenleinii.